The chain runs to 148 residues: MAGIIFDDMFKVKSVDPDGKKFDRVSRYFCDAESFKMELIIDINSQIYPLKQNDKVRLVLATTLREDGLADEGEYDPKAEYPRIKQYEYVMYGKVYRLEDDDTGTDGGKLAAYASFGGLLMRLKGEAINLHGFEVDMNLYLLMKKTDF.

The segment at 16 to 40 (DPDGKKFDRVSRYFCDAESFKMELI) is non-specific ssDNA binding.

The protein belongs to the eukaryotic RPB8 RNA polymerase subunit family. Component of the RNA polymerase I (Pol I), RNA polymerase II (Pol II) and RNA polymerase III (Pol III) complexes consisting of at least 13, 12 and 17 subunits, respectively. Directly interacts with POLR2A.

It is found in the nucleus. In terms of biological role, DNA-dependent RNA polymerase catalyzes the transcription of DNA into RNA using the four ribonucleoside triphosphates as substrates. Common component of RNA polymerases I, II and III which synthesize ribosomal RNA precursors, mRNA precursors and many functional non-coding RNAs, and small RNAs, such as 5S rRNA and tRNAs, respectively. This Caenorhabditis elegans protein is Probable DNA-directed RNA polymerases I, II, and III subunit RPABC3 (rpb-8).